Here is a 141-residue protein sequence, read N- to C-terminus: MAIERTLSIIKPDAVAKNVIGQIYARFEAAGLKIAAARMIHLSRAEAEQFYAVHKERPFFKDLVDFMISGPVMVQALEGENAVLKNRELMGATDPKKAAPGTIRADFADSIDANAVHGSDAAETAQVEVAFFFPGLNIYSR.

The ATP site is built by lysine 11, phenylalanine 59, arginine 87, threonine 93, arginine 104, and asparagine 114. The Pros-phosphohistidine intermediate role is filled by histidine 117.

The protein belongs to the NDK family. As to quaternary structure, homotetramer. It depends on Mg(2+) as a cofactor.

The protein resides in the cytoplasm. It carries out the reaction a 2'-deoxyribonucleoside 5'-diphosphate + ATP = a 2'-deoxyribonucleoside 5'-triphosphate + ADP. The catalysed reaction is a ribonucleoside 5'-diphosphate + ATP = a ribonucleoside 5'-triphosphate + ADP. Functionally, major role in the synthesis of nucleoside triphosphates other than ATP. The ATP gamma phosphate is transferred to the NDP beta phosphate via a ping-pong mechanism, using a phosphorylated active-site intermediate. The chain is Nucleoside diphosphate kinase from Acidovorax sp. (strain JS42).